Reading from the N-terminus, the 562-residue chain is Zinc finger protein 579 (562 aa).

The span at 1–11 (MDPQPPPPAQG) shows a compositional bias: pro residues. Residues 1 to 43 (MDPQPPPPAQGSPPHRGRGRGRGRGRGRGRGRGRGGAGAPRAP) are disordered. The span at 15–33 (HRGRGRGRGRGRGRGRGRG) shows a compositional bias: basic residues. 3 consecutive C2H2-type zinc fingers follow at residues 44–66 (LPCP…RLSH), 72–94 (HACP…LRGH), and 100–123 (LRCA…AQEH). The residue at position 92 (Arg92) is an Omega-N-methylarginine. The interval 139-203 (TAEPSWGPQD…SESEEAEAGA (65 aa)) is disordered. Phosphoserine occurs at positions 194 and 196. C2H2-type zinc fingers lie at residues 270 to 292 (HQCS…RLVH) and 298 to 320 (FVCP…RRVH). Positions 327 to 379 (APLPAAGKKDDKASGARNSAKGPEGGEGAECGGASEGGEGQNGGDAAPARPPA) are disordered. Residues 349–369 (PEGGEGAECGGASEGGEGQNG) show a composition bias toward gly residues. C2H2-type zinc fingers lie at residues 384 to 406 (FWCP…GVTH), 412 to 434 (FQCV…AQVH), and 441 to 463 (HPCP…QRCH). Positions 477–562 (QAQAPTSPPP…HLRGLGGLAS (86 aa)) are disordered. Composition is skewed to pro residues over residues 482 to 491 (TSPPPPPPPL) and 512 to 525 (PSPG…PAPP). Ser483 bears the Phosphoserine mark.

This sequence belongs to the krueppel C2H2-type zinc-finger protein family.

It localises to the nucleus. Functionally, may be involved in transcriptional regulation. This chain is Zinc finger protein 579 (ZNF579), found in Homo sapiens (Human).